A 374-amino-acid chain; its full sequence is Dual-specificity RNA methyltransferase RlmN (374 aa).

E94 (proton acceptor) is an active-site residue. Positions 100–339 constitute a Radical SAM core domain; sequence EEDRATLCVS…VTIRKTRGDD (240 aa). The cysteines at positions 107 and 344 are disulfide-linked. [4Fe-4S] cluster is bound by residues C114, C118, and C121. S-adenosyl-L-methionine contacts are provided by residues 168–169, S200, 222–224, and N301; these read GE and SLH. C344 functions as the S-methylcysteine intermediate in the catalytic mechanism.

The protein belongs to the radical SAM superfamily. RlmN family. [4Fe-4S] cluster serves as cofactor.

It is found in the cytoplasm. The catalysed reaction is adenosine(2503) in 23S rRNA + 2 reduced [2Fe-2S]-[ferredoxin] + 2 S-adenosyl-L-methionine = 2-methyladenosine(2503) in 23S rRNA + 5'-deoxyadenosine + L-methionine + 2 oxidized [2Fe-2S]-[ferredoxin] + S-adenosyl-L-homocysteine. The enzyme catalyses adenosine(37) in tRNA + 2 reduced [2Fe-2S]-[ferredoxin] + 2 S-adenosyl-L-methionine = 2-methyladenosine(37) in tRNA + 5'-deoxyadenosine + L-methionine + 2 oxidized [2Fe-2S]-[ferredoxin] + S-adenosyl-L-homocysteine. Functionally, specifically methylates position 2 of adenine 2503 in 23S rRNA and position 2 of adenine 37 in tRNAs. m2A2503 modification seems to play a crucial role in the proofreading step occurring at the peptidyl transferase center and thus would serve to optimize ribosomal fidelity. This Vibrio vulnificus (strain CMCP6) protein is Dual-specificity RNA methyltransferase RlmN.